A 152-amino-acid chain; its full sequence is Transcriptional regulator MraZ (152 aa).

SpoVT-AbrB domains lie at 5 to 52 (ASAI…PVQE) and 81 to 124 (AHEC…DEAA).

The protein belongs to the MraZ family. As to quaternary structure, forms oligomers.

The protein localises to the cytoplasm. The protein resides in the nucleoid. The sequence is that of Transcriptional regulator MraZ from Shewanella piezotolerans (strain WP3 / JCM 13877).